The following is a 157-amino-acid chain: Transcription elongation factor GreA (157 aa).

Residues 13-75 (RARLEAELEE…EIKSILARAQ (63 aa)) are a coiled coil.

Belongs to the GreA/GreB family.

Necessary for efficient RNA polymerase transcription elongation past template-encoded arresting sites. The arresting sites in DNA have the property of trapping a certain fraction of elongating RNA polymerases that pass through, resulting in locked ternary complexes. Cleavage of the nascent transcript by cleavage factors such as GreA or GreB allows the resumption of elongation from the new 3'terminus. GreA releases sequences of 2 to 3 nucleotides. The polypeptide is Transcription elongation factor GreA (Roseiflexus castenholzii (strain DSM 13941 / HLO8)).